A 279-amino-acid polypeptide reads, in one-letter code: Acyl-coenzyme A thioesterase MBLAC2 (279 aa).

At S2 the chain carries N-acetylserine. Zn(2+)-binding residues include H83, H85, D87, H88, H170, D189, and H231. C254 carries S-palmitoyl cysteine lipidation.

This sequence belongs to the metallo-beta-lactamase superfamily. Glyoxalase II family. It depends on Zn(2+) as a cofactor. Post-translationally, palmitoylated on Cys-254 by ZDHHC20.

Its subcellular location is the endoplasmic reticulum membrane. The protein localises to the cell membrane. The enzyme catalyses hexadecanoyl-CoA + H2O = hexadecanoate + CoA + H(+). The catalysed reaction is dodecanoyl-CoA + H2O = dodecanoate + CoA + H(+). It catalyses the reaction tetradecanoyl-CoA + H2O = tetradecanoate + CoA + H(+). It carries out the reaction octadecanoyl-CoA + H2O = octadecanoate + CoA + H(+). The enzyme catalyses a beta-lactam + H2O = a substituted beta-amino acid. With respect to regulation, beta-lactamase activity is inhibited by sulbactam. Functionally, acyl-CoA thioesterases are a group of enzymes that catalyze the hydrolysis of acyl-CoAs to the free fatty acid and coenzyme A (CoASH), providing the potential to regulate intracellular levels of acyl-CoAs, free fatty acids and CoASH. Has an acyl-CoA thioesterase activity towards the long chain fatty acyl-CoA thioester palmitoyl-CoA (hexadecanoyl-CoA; C16:0-CoA). Displays a substrate preference for fatty acyl-CoAs with chain-lengths C12-C18. Possesses beta-lactamase activity, catalyzing the hydrolysis of penicillin G and nitrocefin. Exhibits no activity towards other beta-lactam antibiotic classes including cephalosporins (cefotaxime) and carbapenems (imipenem). The protein is Acyl-coenzyme A thioesterase MBLAC2 (MBLAC2) of Homo sapiens (Human).